A 378-amino-acid polypeptide reads, in one-letter code: Dual-specificity RNA methyltransferase RlmN (378 aa).

Glu-96 (proton acceptor) is an active-site residue. The Radical SAM core domain occupies 102 to 342 (QGGRGTLCVS…VRTTRGDDID (241 aa)). Cys-109 and Cys-345 are oxidised to a cystine. Positions 116, 120, and 123 each coordinate [4Fe-4S] cluster. S-adenosyl-L-methionine is bound by residues 170 to 171 (GE), Ser-202, 224 to 226 (SLH), and Asn-302. Cys-345 acts as the S-methylcysteine intermediate in catalysis.

Belongs to the radical SAM superfamily. RlmN family. It depends on [4Fe-4S] cluster as a cofactor.

Its subcellular location is the cytoplasm. It catalyses the reaction adenosine(2503) in 23S rRNA + 2 reduced [2Fe-2S]-[ferredoxin] + 2 S-adenosyl-L-methionine = 2-methyladenosine(2503) in 23S rRNA + 5'-deoxyadenosine + L-methionine + 2 oxidized [2Fe-2S]-[ferredoxin] + S-adenosyl-L-homocysteine. It carries out the reaction adenosine(37) in tRNA + 2 reduced [2Fe-2S]-[ferredoxin] + 2 S-adenosyl-L-methionine = 2-methyladenosine(37) in tRNA + 5'-deoxyadenosine + L-methionine + 2 oxidized [2Fe-2S]-[ferredoxin] + S-adenosyl-L-homocysteine. Specifically methylates position 2 of adenine 2503 in 23S rRNA and position 2 of adenine 37 in tRNAs. m2A2503 modification seems to play a crucial role in the proofreading step occurring at the peptidyl transferase center and thus would serve to optimize ribosomal fidelity. This is Dual-specificity RNA methyltransferase RlmN from Pseudomonas paraeruginosa (strain DSM 24068 / PA7) (Pseudomonas aeruginosa (strain PA7)).